Reading from the N-terminus, the 209-residue chain is Small ribosomal subunit protein eS1 (209 aa).

The protein belongs to the eukaryotic ribosomal protein eS1 family.

The polypeptide is Small ribosomal subunit protein eS1 (Picrophilus torridus (strain ATCC 700027 / DSM 9790 / JCM 10055 / NBRC 100828 / KAW 2/3)).